The sequence spans 174 residues: RNA pyrophosphohydrolase (174 aa).

The Nudix hydrolase domain occupies 6–149 (GFRANVGIII…KRDVYRKVMK (144 aa)). The short motif at 38 to 59 (GGVDDGESAEEAMYRELYEEVG) is the Nudix box element.

Belongs to the Nudix hydrolase family. RppH subfamily. A divalent metal cation serves as cofactor.

In terms of biological role, accelerates the degradation of transcripts by removing pyrophosphate from the 5'-end of triphosphorylated RNA, leading to a more labile monophosphorylated state that can stimulate subsequent ribonuclease cleavage. The protein is RNA pyrophosphohydrolase of Shewanella oneidensis (strain ATCC 700550 / JCM 31522 / CIP 106686 / LMG 19005 / NCIMB 14063 / MR-1).